The following is a 570-amino-acid chain: Proline--tRNA ligase (570 aa).

The segment at 238-257 (ARPAPAEHAEPRPLEKVETP) is disordered.

Belongs to the class-II aminoacyl-tRNA synthetase family. ProS type 1 subfamily. As to quaternary structure, homodimer.

The protein resides in the cytoplasm. It carries out the reaction tRNA(Pro) + L-proline + ATP = L-prolyl-tRNA(Pro) + AMP + diphosphate. In terms of biological role, catalyzes the attachment of proline to tRNA(Pro) in a two-step reaction: proline is first activated by ATP to form Pro-AMP and then transferred to the acceptor end of tRNA(Pro). As ProRS can inadvertently accommodate and process non-cognate amino acids such as alanine and cysteine, to avoid such errors it has two additional distinct editing activities against alanine. One activity is designated as 'pretransfer' editing and involves the tRNA(Pro)-independent hydrolysis of activated Ala-AMP. The other activity is designated 'posttransfer' editing and involves deacylation of mischarged Ala-tRNA(Pro). The misacylated Cys-tRNA(Pro) is not edited by ProRS. In Geobacter sulfurreducens (strain ATCC 51573 / DSM 12127 / PCA), this protein is Proline--tRNA ligase.